Here is a 235-residue protein sequence, read N- to C-terminus: Acyl-protein thioesterase 1 (235 aa).

Active-site charge relay system residues include Ser-119, Asp-172, and His-206.

This sequence belongs to the AB hydrolase superfamily. AB hydrolase 2 family.

It is found in the cytoplasm. Its subcellular location is the nucleus. The enzyme catalyses S-hexadecanoyl-L-cysteinyl-[protein] + H2O = L-cysteinyl-[protein] + hexadecanoate + H(+). Hydrolyzes fatty acids from S-acylated cysteine residues in proteins with a strong preference for palmitoylated G-alpha proteins over other acyl substrates. Mediates the deacylation of G-alpha proteins such as GPA1 in vivo, but has weak or no activity toward palmitoylated Ras proteins. Has weak lysophospholipase activity in vitro; however such activity may not exist in vivo. This is Acyl-protein thioesterase 1 from Eremothecium gossypii (strain ATCC 10895 / CBS 109.51 / FGSC 9923 / NRRL Y-1056) (Yeast).